A 1103-amino-acid polypeptide reads, in one-letter code: PALM2-AKAP2 fusion protein (1103 aa).

Disordered stretches follow at residues E178–P197 and Y304–D396. Residues S179–P189 are compositionally biased toward polar residues. A phosphoserine mark is found at S322, S352, and S383. The segment covering V380–C392 has biased composition (low complexity). Residue K405 forms a Glycyl lysine isopeptide (Lys-Gly) (interchain with G-Cter in SUMO1); alternate linkage. K405 is covalently cross-linked (Glycyl lysine isopeptide (Lys-Gly) (interchain with G-Cter in SUMO2); alternate). A coiled-coil region spans residues E444 to Q521. 2 disordered regions span residues E483–K544 and N566–W662. Basic and acidic residues predominate over residues L490–Q505. The span at Q506–Q521 shows a compositional bias: low complexity. The segment covering P522 to A531 has biased composition (polar residues). Over residues S533–K544 the composition is skewed to basic and acidic residues. The segment covering N566 to R579 has biased composition (polar residues). Residues S567 and S624 each carry the phosphoserine modification. A compositionally biased stretch (polar residues) spans A633 to Q643. Phosphoserine is present on residues S692, S696, and S748. Positions Q745 to P763 are enriched in polar residues. The interval Q745–D794 is disordered. T757 carries the post-translational modification Phosphothreonine. The tract at residues L797–Q810 is PKA-RII subunit binding domain. The segment covering V817 to A829 has biased composition (basic and acidic residues). Positions V817–P907 are disordered. At S862 the chain carries Phosphoserine. Basic and acidic residues predominate over residues Q865–G886. Positions K941 to S979 form a coiled coil. Phosphoserine occurs at positions 951, 979, 1009, and 1016. Residues E962–L1035 form a disordered region. Residues S976 to S990 show a composition bias toward polar residues.

In terms of tissue distribution, expressed in infantile heart and muscle, and fibroblasts.

It is found in the apical cell membrane. Functionally, binds to regulatory subunit (RII) of protein kinase A. May be involved in establishing polarity in signaling systems or in integrating PKA-RII isoforms with downstream effectors to capture, amplify and focus diffuse, trans-cellular signals carried by cAMP. Binds to and modulates the structure of the actin cytoskeleton. This is PALM2-AKAP2 fusion protein from Homo sapiens (Human).